Reading from the N-terminus, the 601-residue chain is UvrABC system protein C (601 aa).

The GIY-YIG domain occupies 15 to 94 (LQPGVYLFKN…IKSYKPRYNI (80 aa)). The 36-residue stretch at 202 to 237 (QEIVREKEKEMAMAARSLEFEKAARLRDQIQSLRQL) folds into the UVR domain.

Belongs to the UvrC family. In terms of assembly, interacts with UvrB in an incision complex.

It is found in the cytoplasm. The UvrABC repair system catalyzes the recognition and processing of DNA lesions. UvrC both incises the 5' and 3' sides of the lesion. The N-terminal half is responsible for the 3' incision and the C-terminal half is responsible for the 5' incision. This chain is UvrABC system protein C, found in Syntrophomonas wolfei subsp. wolfei (strain DSM 2245B / Goettingen).